Here is a 461-residue protein sequence, read N- to C-terminus: Growth/differentiation factor 7 (461 aa).

Positions 1 to 19 (MDLSAAAALCLWLLSACRP) are cleaved as a signal peptide. Positions 20–315 (RDGLEAAAVL…ANLGGRRRRR (296 aa)) are excised as a propeptide. Asparagine 79 carries an N-linked (GlcNAc...) asparagine glycan. Residues 287–360 (LRAAAEPPPD…GHGRRGRSRC (74 aa)) form a disordered region. Positions 323–350 (GAQGSGGGGGGGGGGGGGGGGGGGGAGR) are enriched in gly residues. Basic residues predominate over residues 351–360 (GHGRRGRSRC). 3 cysteine pairs are disulfide-bonded: cysteine 360/cysteine 426, cysteine 389/cysteine 458, and cysteine 393/cysteine 460.

It belongs to the TGF-beta family. In terms of assembly, homodimer; disulfide-linked.

Its subcellular location is the secreted. The polypeptide is Growth/differentiation factor 7 (Gdf7) (Mus musculus (Mouse)).